Consider the following 439-residue polypeptide: Packaging protein 1 (439 aa).

The span at 1 to 23 shows a compositional bias: polar residues; the sequence is MSTQIPARQETYDPSQSSGTKTP. The segment at 1–42 is disordered; that stretch reads MSTQIPARQETYDPSQSSGTKTPSHPYDGNPTRSYPKRNAGK. 151–158 provides a ligand contact to ATP; sequence GPTGSGKS. A DNA-binding region spans residues 419-439; the sequence is ERNPKLTDLEKLSPPGTFQET.

The protein belongs to the adenoviridae packaging protein 1 family. Homodimer. Part of a genome packaging complex composed of packaging proteins 1, 2 and 3; this complex specifically binds to the packaging sequence on the left end of viral genomic DNA and performs packaging of the viral genome. Interacts with protein 33K.

It is found in the virion. The protein resides in the host nucleus. It localises to the host nucleoplasm. The protein localises to the host nucleolus. Functionally, component of the packaging machinery which encapsidates the viral DNA into preformed capsids and transcriptional activator of the viral major late promoter (MLP). Binds, along with packaging proteins 2 and 3, to the specific packaging sequence on the left end of viral genomic DNA and displays ATPase activity thereby providing the power stroke of the packaging machinery. The activity of packaging protein IVa2 is stimulated by protein 33K which acts as a terminase. May be the protein that pumps DNA into the capsid powered by ATP hydrolysis. Specifically binds to the 5'-CG-3' nucleotides of the repeats making up the packaging sequence. Component of the DEF-A and DEF-B transcription factors that bind downstream elements of the major late promoter (MLP), and stimulate transcription from the MLP after initiation of viral DNA replication. DEF-A is a heterodimer packaging proteins 1 and 2 and DEF-B is a homodimer of packaging protein 1. This chain is Packaging protein 1, found in Fowl adenovirus A serotype 1 (strain CELO / Phelps) (FAdV-1).